Consider the following 169-residue polypeptide: Glycine-rich RNA-binding protein 10 (169 aa).

In terms of domain architecture, RRM spans 6 to 84; that stretch reads YRCFVGGLAW…RTITVNEAQS (79 aa). 2 disordered regions span residues 80 to 101 and 121 to 169; these read NEAQSRGGGGGGGRGGGGYGGR and GYGS…GGGW. The segment covering 85–101 has biased composition (gly residues); sequence RGGGGGGGRGGGGYGGR.

In terms of tissue distribution, expressed only in roots and stems.

Functionally, possibly has a role in RNA transcription or processing during stress. This Brassica napus (Rape) protein is Glycine-rich RNA-binding protein 10 (GRP10).